Reading from the N-terminus, the 475-residue chain is Equilibrative nucleoside transporter 3 (475 aa).

The Cytoplasmic portion of the chain corresponds to 1–51; sequence MAFASEDNVYHSSNAVYRAPSNHQEADQEALLGKLLDYPAPGLQRPEDRFN. Phosphoserine is present on Ser-21. The Dileucine internalization motif signature appears at 31-32; the sequence is LL. Residues 52-72 form a helical membrane-spanning segment; the sequence is GAYIIFFCLGIGGLLPWNFFV. Topologically, residues 73 to 105 are extracellular; it reads TAKEYWAYKLRNCSSPASGEDPEDMDILNYFES. The N-linked (GlcNAc...) asparagine glycan is linked to Asn-84. The chain crosses the membrane as a helical span at residues 106–126; that stretch reads YLAVASTVPSLLFLVANFLLV. Topologically, residues 127–134 are cytoplasmic; it reads NRVQVHVR. The chain crosses the membrane as a helical span at residues 135 to 155; that stretch reads VLASLSVSLAIFVVMIVLVKV. At 156 to 162 the chain is on the extracellular side; the sequence is DTSSWTR. Residues 163–183 traverse the membrane as a helical segment; sequence GFFSLTIACMAIISSSSTIFN. Topologically, residues 184 to 199 are cytoplasmic; sequence SSVYGLTGSFPMRNAQ. Residues 200–220 form a helical membrane-spanning segment; the sequence is ALISGGAMGGTVSAVALLVDL. The Extracellular portion of the chain corresponds to 221-230; that stretch reads AASSDVRDST. A helical transmembrane segment spans residues 231 to 251; the sequence is LAFFLMAAVFLGLCMGLYLLL. Topologically, residues 252 to 305 are cytoplasmic; it reads SQLEYARYYMRPVAPVRVFSGEDNPSQDAPSASSVAPASRVMHTPPLGPILKKT. The chain crosses the membrane as a helical span at residues 306-326; sequence ASLGFCAVSLYFVTAFIIPAI. The Extracellular segment spans residues 327-340; it reads STNIQSMHKGTGSP. Residues 341 to 361 traverse the membrane as a helical segment; sequence WTSKFFVPLTVFLLFNFADLC. Residues 362–377 lie on the Cytoplasmic side of the membrane; that stretch reads GRQVTAWIQVPGPRSK. Residues 378-398 form a helical membrane-spanning segment; it reads LLPGLVVSRFCLVPLFLLCNY. Residues 399–415 lie on the Extracellular side of the membrane; sequence QPRSHLTKVLFQSDIYP. The helical transmembrane segment at 416–436 threads the bilayer; sequence VLFTCLLGLSNGYLSTLVLIY. At 437 to 450 the chain is on the cytoplasmic side; the sequence is GPKIVPRELAEATS. Residues 451 to 471 form a helical membrane-spanning segment; sequence VVMLFYMSVGLMLGSACAALL. Over 472–475 the chain is Extracellular; sequence EHFI.

Belongs to the SLC29A/ENT transporter (TC 2.A.57) family. As to expression, expressed in macrophages.

The protein resides in the lysosome membrane. It localises to the late endosome membrane. It is found in the mitochondrion membrane. Its subcellular location is the cell membrane. It catalyses the reaction adenosine(in) = adenosine(out). The catalysed reaction is guanosine(in) = guanosine(out). The enzyme catalyses inosine(in) = inosine(out). It carries out the reaction uridine(out) = uridine(in). It catalyses the reaction cytidine(in) = cytidine(out). The catalysed reaction is thymidine(in) = thymidine(out). The enzyme catalyses 2'-deoxyadenosine(in) = 2'-deoxyadenosine(out). It carries out the reaction 2'-deoxycytidine(in) = 2'-deoxycytidine(out). It catalyses the reaction guanine(out) = guanine(in). The catalysed reaction is uracil(in) = uracil(out). The enzyme catalyses (R)-noradrenaline(out) = (R)-noradrenaline(in). It carries out the reaction dopamine(out) = dopamine(in). It catalyses the reaction serotonin(out) = serotonin(in). The catalysed reaction is tyramine(in) = tyramine(out). The enzyme catalyses ATP(in) = ATP(out). In terms of biological role, uniporter that mediates the facilitative transport of nucleoside across lysosomal and mitochondrial membranes. Functions as a non-electrogenic Na(+)-independent transporter. Substrate transport is pH-dependent and enhanced under acidic condition, probably reflecting the location of the transporter in acidic intracellular compartments. Proton is not a cotransporting ion but most likely change the ionization state of the transporter which dictates transport-permissible/impermissible conformation for nucleoside translocation. May direct the nucleoside transport from lysosomes to cytosol or cytosol to mitochondria to facilitate the fundamental function of salvage synthesis of nucleic acids. Involved in the transport of nucleosides (adenosine, guanosine, uridine, thymidine, cytidine and inosine) and deoxynucleosides (deoxyadenosine, deoxycytidine). Also mediates transport of purine nucleobases (adenine, guanine), and pyrimidine nucleobases (uracil). Also able to transport monoamine neurotransmitters dopamine, serotonin, noradrenaline and tyramine. Capable of transporting ATP. Mediates nucleoside export from lysosomes in macrophages, which regulates macrophage functions and numbers. In Mus musculus (Mouse), this protein is Equilibrative nucleoside transporter 3.